An 885-amino-acid chain; its full sequence is DNA-directed RNA polymerase subunit Rpo1N (885 aa).

Cys60, Cys63, Cys70, His73, Cys100, Cys103, Cys150, and Cys153 together coordinate Zn(2+). Residues Asp464, Asp466, and Asp468 each coordinate Mg(2+).

This sequence belongs to the RNA polymerase beta' chain family. As to quaternary structure, part of the RNA polymerase complex. Mg(2+) serves as cofactor. The cofactor is Zn(2+).

Its subcellular location is the cytoplasm. The catalysed reaction is RNA(n) + a ribonucleoside 5'-triphosphate = RNA(n+1) + diphosphate. In terms of biological role, DNA-dependent RNA polymerase (RNAP) catalyzes the transcription of DNA into RNA using the four ribonucleoside triphosphates as substrates. Forms the clamp head domain. This Thermoplasma acidophilum (strain ATCC 25905 / DSM 1728 / JCM 9062 / NBRC 15155 / AMRC-C165) protein is DNA-directed RNA polymerase subunit Rpo1N.